The chain runs to 1300 residues: Insulin receptor-related protein (1300 aa).

Residues 1–26 (MAVPALWPWGVHLLMSLLSLGSGLDT) form the signal peptide. N-linked (GlcNAc...) asparagine glycans are attached at residues N47 and N100. Disulfide bonds link C214–C222, C216–C228, C229–C237, C233–C246, C249–C258, C262–C274, C280–C300, C304–C317, and C320–C324. A glycan (N-linked (GlcNAc...) asparagine) is linked at N311. 8 N-linked (GlcNAc...) asparagine glycosylation sites follow: N411, N492, N528, N616, N634, N756, N885, and N898. 2 consecutive Fibronectin type-III domains span residues 483–603 (QTRT…TLPA) and 607–707 (VPQD…AQEV). C657 and C864 form a disulfide bridge. Topologically, residues 747 to 921 (EAGLLRLGKN…LEEEDTGGMR (175 aa)) are extracellular. Positions 818-913 (IPGKVAWKAA…GVTFYITDLE (96 aa)) constitute a Fibronectin type-III 3 domain. The helical transmembrane segment at 922–943 (IFLTVTPVGFMLLVTLAALGFF) threads the bilayer. Residues 944–1300 (YSRKRNSTLY…YSAPNGGPGH (357 aa)) are Cytoplasmic-facing. The Protein kinase domain occupies 979-1254 (IAIIRELGQG…RIQDELRPSF (276 aa)). Residues 985–993 (LGQGSFGMV) and K1013 each bind ATP. The active-site Proton acceptor is D1115. Residues Y1145 and Y1146 each carry the phosphotyrosine; by autocatalysis modification. The segment at 1273-1300 (LPTEAEPDSPPTLNGASDYSAPNGGPGH) is disordered.

This sequence belongs to the protein kinase superfamily. Tyr protein kinase family. Insulin receptor subfamily. Probable tetramer of 2 alpha and 2 beta chains linked by disulfide bonds. The alpha chains contribute to the formation of the ligand-binding domain, while the beta chains carry the kinase domain. In terms of processing, autophosphorylated on tyrosine residues between pH 7.9 and pH 10.5. As to expression, highly expressed in the islets as well as in pancreatic beta-cells.

It is found in the membrane. The enzyme catalyses L-tyrosyl-[protein] + ATP = O-phospho-L-tyrosyl-[protein] + ADP + H(+). Its function is as follows. Receptor with tyrosine-protein kinase activity. Functions as a pH sensing receptor which is activated by increased extracellular pH. Activates an intracellular signaling pathway that involves IRS1 and AKT1/PKB. This is Insulin receptor-related protein (Insrr) from Mus musculus (Mouse).